We begin with the raw amino-acid sequence, 301 residues long: UDP-N-acetylenolpyruvoylglucosamine reductase (301 aa).

One can recognise an FAD-binding PCMH-type domain in the interval 30-194 (VGGEPDYLVF…LSAKFALAPG (165 aa)). Arg173 is an active-site residue. Ser223 acts as the Proton donor in catalysis. Glu293 is an active-site residue.

It belongs to the MurB family. Requires FAD as cofactor.

Its subcellular location is the cytoplasm. The enzyme catalyses UDP-N-acetyl-alpha-D-muramate + NADP(+) = UDP-N-acetyl-3-O-(1-carboxyvinyl)-alpha-D-glucosamine + NADPH + H(+). It participates in cell wall biogenesis; peptidoglycan biosynthesis. Functionally, cell wall formation. This chain is UDP-N-acetylenolpyruvoylglucosamine reductase, found in Streptococcus pneumoniae (strain CGSP14).